Here is a 121-residue protein sequence, read N- to C-terminus: Autophagy-related protein 8f (121 aa).

A lipid anchor (Phosphatidylethanolamine amidated glycine) is attached at glycine 117. A propeptide spans 118–121 (FGSP) (removed in mature form).

This sequence belongs to the ATG8 family. In terms of assembly, interacts with ATG4. Interacts with NBR1. Interacts with ATI1 and ATI2. Interacts with SH3P2. Post-translationally, the C-terminal 4 residues are removed by ATG4 to expose Gly-117 at the C-terminus. This Gly-117 forms then a thioester bond with the 'Cys-558' of ATG7 (E1-like activating enzyme) before being transferred to the 'Cys-258' of ATG3 (the specific E2 conjugating enzyme), in order to be finally amidated with phosphatidylethanolamine. This lipid modification anchors ATG8 to autophagosomes. Constitutively expressed.

It localises to the cytoplasmic vesicle. The protein localises to the autophagosome membrane. Its subcellular location is the vacuole membrane. The protein resides in the cytoplasm. It is found in the cytoskeleton. Its function is as follows. Ubiquitin-like modifier involved in autophagosomes formation. May mediate the delivery of the autophagosomes to the vacuole via the microtubule cytoskeleton. This is Autophagy-related protein 8f (ATG8F) from Arabidopsis thaliana (Mouse-ear cress).